We begin with the raw amino-acid sequence, 377 residues long: Acetyltransferase ple2 (377 aa).

An N-terminal signal peptide occupies residues methionine 1–glycine 27. A run of 4 helical transmembrane segments spans residues tryptophan 29–aspartate 49, isoleucine 56–valine 76, isoleucine 176–leucine 196, and proline 258–glycine 278.

This sequence belongs to the wax synthase family.

It localises to the membrane. It participates in secondary metabolite biosynthesis; terpenoid biosynthesis. In terms of biological role, acetyltransferase; part of the gene cluster that mediates the biosynthesis of pleuromutilin, a tricyclic diterpene showing antibacterial properties. The geranylgeranyl diphosphate (GGPP) synthase ple4 catalyzes the first step in pleuromutilin biosynthesis. GGPP is then substrate of the premutilin synthase (PS) ple3 to yield premutilin. Premutilin synthase is a bifunctional enzyme composed of the fusion of a class II diterpene cyclase (DTC) and a class I diterpene synthase (DTS), with the corresponding domains and active sites containing characteristic aspartate-rich motifs. GGPP is first converted to mutildienyl-diphosphate (MPP) at the class II DTC site. MPP is subsequently further cyclized at the class I DTS site, followed by a 1,5-hydride shift and addition of water prior to terminating deprotonation, to yield premutilin. The cytochrome P450 monooxygenases ple5 and ple6 hydroxylate premutilin at C-11 and C-3, respectively, producing 11-hydroxypremutilin and 3-hydroxypremutilin. The combination of the actions of both ple5 and ple6 leads to the production of 3,11-dihydroxypremutilin. The short chain dehydrogenase ple7 further converts 3,11-dihydroxypremutilin into mutilin. The acetyltransferase ple2 then acetylates mutilin to produce 14-O-acetylmutilin. Finally, the cytochrome P450 monooxygenase ple1 catalyzes hydroxylation on the alpha position of the acetyl side chain of 14-O-acetylmutilin to yield pleuromutilin. In Rhodocybe pseudopiperita (Clitopilus pseudopiperitus), this protein is Acetyltransferase ple2.